A 230-amino-acid polypeptide reads, in one-letter code: Small ribosomal subunit protein uS3 (230 aa).

Positions 43-95 (VNRVIIYSARPKMISEERKAHLAKLLELKFGLEKPVIEVLPIENPNLDAHVIA) constitute a KH type-2 domain.

Belongs to the universal ribosomal protein uS3 family. As to quaternary structure, part of the 30S ribosomal subunit.

Its function is as follows. Binds the lower part of the 30S subunit head. This Nanoarchaeum equitans (strain Kin4-M) protein is Small ribosomal subunit protein uS3.